Reading from the N-terminus, the 209-residue chain is MRKKPIIIGVTGGSGSGKTSVSRAILANFPNAKIAMIEHDSYYKDQSHLTFEERVTTNYDHPLAFETDLLINHLKELIADRPVDIPIYDYTQHTRSEKSYRQEPQDVFIVEGILVLEDQRLRDLMDIKLFVDTDDDIRIIRRIKRDMQERGRSLDSIIEQYTRVVKPMYHQFIEPTKRYADIVVPEGVSNLVAIDLINTKVASILNETH.

An ATP-binding site is contributed by 12–19 (GGSGSGKT).

Belongs to the uridine kinase family.

Its subcellular location is the cytoplasm. It catalyses the reaction uridine + ATP = UMP + ADP + H(+). The enzyme catalyses cytidine + ATP = CMP + ADP + H(+). Its pathway is pyrimidine metabolism; CTP biosynthesis via salvage pathway; CTP from cytidine: step 1/3. It participates in pyrimidine metabolism; UMP biosynthesis via salvage pathway; UMP from uridine: step 1/1. This chain is Uridine kinase, found in Streptococcus mutans serotype c (strain ATCC 700610 / UA159).